The primary structure comprises 833 residues: Leucine--tRNA ligase (833 aa).

A 'HIGH' region motif is present at residues 41-52 (PYPSGAGLHVGH). The 'KMSKS' region signature appears at 610 to 614 (KMSKS). An ATP-binding site is contributed by lysine 613.

Belongs to the class-I aminoacyl-tRNA synthetase family.

The protein localises to the cytoplasm. It carries out the reaction tRNA(Leu) + L-leucine + ATP = L-leucyl-tRNA(Leu) + AMP + diphosphate. The sequence is that of Leucine--tRNA ligase from Streptococcus pyogenes serotype M6 (strain ATCC BAA-946 / MGAS10394).